The primary structure comprises 267 residues: Tryptophan synthase alpha chain (267 aa).

Residues Glu49 and Asp60 each act as proton acceptor in the active site.

It belongs to the TrpA family. In terms of assembly, tetramer of two alpha and two beta chains.

The enzyme catalyses (1S,2R)-1-C-(indol-3-yl)glycerol 3-phosphate + L-serine = D-glyceraldehyde 3-phosphate + L-tryptophan + H2O. It participates in amino-acid biosynthesis; L-tryptophan biosynthesis; L-tryptophan from chorismate: step 5/5. The alpha subunit is responsible for the aldol cleavage of indoleglycerol phosphate to indole and glyceraldehyde 3-phosphate. The polypeptide is Tryptophan synthase alpha chain (Acinetobacter baumannii (strain AB307-0294)).